Consider the following 113-residue polypeptide: Photosystem II reaction center Psb28 protein (113 aa).

Belongs to the Psb28 family. Part of the photosystem II complex.

It localises to the cellular thylakoid membrane. In Prochlorococcus marinus (strain NATL1A), this protein is Photosystem II reaction center Psb28 protein.